Here is a 440-residue protein sequence, read N- to C-terminus: UDP-glucose 6-dehydrogenase YwqF (440 aa).

NAD(+) contacts are provided by residues 2–19 (NITV…GVSL), Val-11, Asp-30, Lys-35, Thr-121, and Glu-155. Substrate contacts are provided by residues 151–155 (EFLRE), Lys-204, Asn-208, 249–253 (FLKAG), and Gly-257. Cys-260 acts as the Nucleophile in catalysis. An NAD(+)-binding site is contributed by Lys-263. Lys-320 is a substrate binding site. Residue Arg-327 coordinates NAD(+).

This sequence belongs to the UDP-glucose/GDP-mannose dehydrogenase family. Post-translationally, phosphorylated on tyrosine residue(s). Phosphorylated by YwqD and dephosphorylated by YwqE in vitro.

The protein resides in the cytoplasm. The enzyme catalyses UDP-alpha-D-glucose + 2 NAD(+) + H2O = UDP-alpha-D-glucuronate + 2 NADH + 3 H(+). Its pathway is nucleotide-sugar biosynthesis; UDP-alpha-D-glucuronate biosynthesis; UDP-alpha-D-glucuronate from UDP-alpha-D-glucose: step 1/1. Competitively inhibited by UDP-glucose. Activated by phosphorylation, which may increase affinity for NAD(+); inhibited by dephosphorylation. Functionally, catalyzes the conversion of UDP-glucose into UDP-glucuronate, one of the precursors of teichuronic acid. The sequence is that of UDP-glucose 6-dehydrogenase YwqF (ywqF) from Bacillus subtilis (strain 168).